We begin with the raw amino-acid sequence, 410 residues long: Protein disulfide isomerase CRELD1 (410 aa).

Residues 1–29 (MGMSRRMFLTVYGSLWLLLLLSRPGVSKP) form the signal peptide. Residues 30–352 (QLCQTCQNLV…GLFDDITDDE (323 aa)) are Extracellular-facing. Positions 32-35 (CQTC) match the CXXC motif. Intrachain disulfides connect Cys32/Cys35, Cys141/Cys155, Cys149/Cys167, and Cys169/Cys178. The 41-residue stretch at 139–179 (LSCPGGTEKPCSGNGQCNGDGTRFGTGVCDCYTSYGGPVCM) folds into the EGF-like 1 domain. FU repeat units follow at residues 194 to 243 (HLVC…DHCK) and 254 to 301 (SYEC…ELPK). The short motif at 264 to 267 (CIGC) is the CXXC element. 4 disulfides stabilise this stretch: Cys264/Cys267, Cys295/Cys309, Cys302/Cys318, and Cys320/Cys331. One can recognise an EGF-like 2; calcium-binding domain in the interval 291–332 (DVDECDSELPKCKGSHEECVNTEGSFTCVCEKDYSRIDGMCR). The helical transmembrane segment at 353-373 (VVVLQQMFFGVVICALATLAA) threads the bilayer. Lys374 is a topological domain (cytoplasmic). Residues 375-395 (GDMVFTAIFIGAVAAMAGYWL) form a helical membrane-spanning segment. Over 396–410 (SEKGDRALDSFMKGR) the chain is Extracellular.

It belongs to the CRELD family.

It is found in the membrane. The enzyme catalyses Catalyzes the rearrangement of -S-S- bonds in proteins.. Its function is as follows. Protein disulfide isomerase. Promotes the localization of acetylcholine receptors (AChRs) to the plasma membrane. This Xenopus tropicalis (Western clawed frog) protein is Protein disulfide isomerase CRELD1 (creld1).